The chain runs to 106 residues: Small ribosomal subunit protein uS10 (106 aa).

The protein belongs to the universal ribosomal protein uS10 family. Part of the 30S ribosomal subunit.

In terms of biological role, involved in the binding of tRNA to the ribosomes. The polypeptide is Small ribosomal subunit protein uS10 (Pyrobaculum neutrophilum (strain DSM 2338 / JCM 9278 / NBRC 100436 / V24Sta) (Thermoproteus neutrophilus)).